The primary structure comprises 722 residues: Dynein axonemal intermediate chain 7 (722 aa).

Over residues 1-15 (MGPKAKKSGSKKKKV) the composition is skewed to basic residues. The disordered stretch occupies residues 1-20 (MGPKAKKSGSKKKKVTKAER).

It belongs to the DNAI7 family. Part of the multisubunit axonemal dynein complex formed at least of two heavy chains and a number of intermediate and light chains. Associates with tubulin. Interacts with microtubule. Ubiquitinated. Ubiquitination leads to its degradation through the 26S proteasome. Ubiquitin-proteasome-mediated DNAI7 degradation occurs in mitosis.

It is found in the cell projection. Its subcellular location is the cilium. The protein localises to the cytoplasm. Its function is as follows. Via its association with the multisubunit axonemal dynein complex, is potentially involved in the regulation of cilia function. May act as a cell cycle regulator. The chain is Dynein axonemal intermediate chain 7 from Macaca fascicularis (Crab-eating macaque).